A 387-amino-acid polypeptide reads, in one-letter code: Pepsin II-1 (387 aa).

Positions 1 to 15 (MKWLLLLGLLALSEC) are cleaved as a signal peptide. Residues 16–59 (IVHKVPLVRKKSLRKNLIEKGLLQDYLKTHTPNLATKYFPKETF) constitute a propeptide, activation peptide. One can recognise a Peptidase A1 domain in the interval 75–384 (YFGTISIGTP…DRANNQVGLA (310 aa)). The active site involves Asp93. Cys106 and Cys111 are oxidised to a cystine. Residue Ser129 is modified to Phosphoserine. A disulfide bond links Cys267 and Cys271. The active site involves Asp276. Residues Cys310 and Cys343 are joined by a disulfide bond.

The protein belongs to the peptidase A1 family.

The protein localises to the secreted. It carries out the reaction Preferential cleavage: hydrophobic, preferably aromatic, residues in P1 and P1' positions. Cleaves 1-Phe-|-Val-2, 4-Gln-|-His-5, 13-Glu-|-Ala-14, 14-Ala-|-Leu-15, 15-Leu-|-Tyr-16, 16-Tyr-|-Leu-17, 23-Gly-|-Phe-24, 24-Phe-|-Phe-25 and 25-Phe-|-Tyr-26 bonds in the B chain of insulin.. Its function is as follows. Shows particularly broad specificity; although bonds involving phenylalanine and leucine are preferred, many others are also cleaved to some extent. The sequence is that of Pepsin II-1 from Oryctolagus cuniculus (Rabbit).